We begin with the raw amino-acid sequence, 78 residues long: Beta-defensin 12 (78 aa).

A signal peptide spans 1–27 (MALSREVFYFGFALFFIVVELPSGSWA). 3 disulfide bridges follow: Cys-46–Cys-73, Cys-53–Cys-67, and Cys-57–Cys-74.

The protein belongs to the beta-defensin family. Only expressed in epididymis (caput, corpus and cauda).

The protein localises to the secreted. Has antibacterial activity. This is Beta-defensin 12 (Defb12) from Mus musculus (Mouse).